Consider the following 439-residue polypeptide: Polygalacturonase QRT2 (439 aa).

The N-terminal stretch at 1 to 21 (MYEKIIILSVFLLTFLPSCFS) is a signal peptide. Residues 43–69 (RQHQHGHNTRNSHLKNRHGYAPRSSPR) are disordered. The span at 44-62 (QHQHGHNTRNSHLKNRHGY) shows a compositional bias: basic residues. 2 PbH1 repeats span residues 201 to 250 (CNNL…HVSG) and 251 to 272 (TQNILIQDSIVRTGDDCISIVS). Residue aspartate 265 is the Proton donor of the active site. The active site involves histidine 288. PbH1 repeat units follow at residues 304-325 (VSNVVVNKATLIGTTNGVRIKT) and 333-354 (AKNIIFQDIIMKNVTNPIIINQ).

The protein belongs to the glycosyl hydrolase 28 family. Expressed predominantly in roots with lower expression levels in rosette leaves, flower buds and siliques. Bearly detected in seeds. Found in flowers undergoing floral organ abscission. Also expressed early in anther development, at the time of microspore separation.

Its subcellular location is the secreted. It is found in the cell wall. The enzyme catalyses (1,4-alpha-D-galacturonosyl)n+m + H2O = (1,4-alpha-D-galacturonosyl)n + (1,4-alpha-D-galacturonosyl)m.. In terms of biological role, polygalacturonase required for cell type-specific pectin degradation to separate microspores. Involved in anther dehiscence and floral organ abscission. The protein is Polygalacturonase QRT2 (QRT2) of Arabidopsis thaliana (Mouse-ear cress).